The primary structure comprises 112 residues: Ferredoxin, plant-type (112 aa).

One can recognise a 2Fe-2S ferredoxin-type domain in the interval 6 to 97 (YEVFEVLSGQ…DLTIEYFRHV (92 aa)). C41, C46, C49, and C81 together coordinate [2Fe-2S] cluster.

It belongs to the 2Fe2S plant-type ferredoxin family.

It participates in aromatic compound metabolism; catechol degradation. Functionally, ferredoxins are iron-sulfur proteins that transfer electrons in a wide variety of metabolic reactions. This is Ferredoxin, plant-type (xylT) from Pseudomonas putida (Arthrobacter siderocapsulatus).